The primary structure comprises 317 residues: Tenomodulin (317 aa).

Residues 1–30 (MAKNPPENCEGCHILNAEALKSKKICKSLK) lie on the Cytoplasmic side of the membrane. A helical; Signal-anchor for type II membrane protein transmembrane segment spans residues 31–50 (ICGLVFGILALTLIVLFWGS). The Extracellular portion of the chain corresponds to 51-317 (KHFWPEVSKK…WWVARMLGRV (267 aa)). The region spanning 93–186 (GNGTDETLEV…ICDNVTMYWI (94 aa)) is the BRICHOS domain. Residue Asn-94 is glycosylated (N-linked (GlcNAc...) asparagine). Cysteines 120 and 178 form a disulfide. N-linked (GlcNAc...) asparagine glycosylation occurs at Asn-180. Ser-239 is modified (phosphoserine).

Belongs to the chondromodulin-1 family. In terms of tissue distribution, widely expressed with highest expression in tendons and ligaments, in the diaphragm, eye and skeletal muscle. Expressed in neuronal cells of all brain regions. Very low expression, if any, in glial cells.

It localises to the membrane. Its subcellular location is the nucleus envelope. Its function is as follows. May be an angiogenesis inhibitor. The sequence is that of Tenomodulin (Tnmd) from Mus musculus (Mouse).